We begin with the raw amino-acid sequence, 471 residues long: Glycosyl hydrolase family 109 protein 1 (471 aa).

An N-terminal signal peptide occupies residues 1–15 (MIKNLSTFFVGIALS). A lipid anchor (N-palmitoyl cysteine) is attached at C16. Residue C16 is the site of S-diacylglycerol cysteine attachment. NAD(+) is bound by residues 70–71 (MR), D92, 141–144 (WKHH), 161–162 (EV), and N190. Residues Y219, R235, 247–250 (YATH), and Y325 each bind substrate. Residue Y247 coordinates NAD(+).

The protein belongs to the Gfo/Idh/MocA family. Glycosyl hydrolase 109 subfamily. It depends on NAD(+) as a cofactor.

The protein localises to the cell membrane. Glycosidase. The chain is Glycosyl hydrolase family 109 protein 1 from Phocaeicola vulgatus (strain ATCC 8482 / DSM 1447 / JCM 5826 / CCUG 4940 / NBRC 14291 / NCTC 11154) (Bacteroides vulgatus).